A 447-amino-acid polypeptide reads, in one-letter code: N-succinylarginine dihydrolase (447 aa).

Substrate-binding positions include 19–28 (AGLSFGNVAS), asparagine 110, and 137–138 (HR). The active site involves glutamate 174. Arginine 214 provides a ligand contact to substrate. The active site involves histidine 250. The substrate site is built by aspartate 252 and asparagine 364. Cysteine 370 (nucleophile) is an active-site residue.

It belongs to the succinylarginine dihydrolase family. In terms of assembly, homodimer.

It catalyses the reaction N(2)-succinyl-L-arginine + 2 H2O + 2 H(+) = N(2)-succinyl-L-ornithine + 2 NH4(+) + CO2. Its pathway is amino-acid degradation; L-arginine degradation via AST pathway; L-glutamate and succinate from L-arginine: step 2/5. Catalyzes the hydrolysis of N(2)-succinylarginine into N(2)-succinylornithine, ammonia and CO(2). This chain is N-succinylarginine dihydrolase, found in Idiomarina loihiensis (strain ATCC BAA-735 / DSM 15497 / L2-TR).